We begin with the raw amino-acid sequence, 655 residues long: uncharacterized protein (655 aa).

A signal peptide spans 1-23; it reads MKRTIKYLSFLGLIPFLSITTIS. Cys-24 carries N-palmitoyl cysteine lipidation. Cys-24 carries S-diacylglycerol cysteine lipidation.

The protein belongs to the MG067/MG068/MG395 family.

It is found in the cell membrane. This is an uncharacterized protein from Mycoplasma capricolum subsp. capricolum (strain California kid / ATCC 27343 / NCTC 10154).